Consider the following 226-residue polypeptide: Phosphatidylserine decarboxylase proenzyme (226 aa).

Serine 184 (schiff-base intermediate with substrate; via pyruvic acid) is an active-site residue. Serine 184 bears the Pyruvic acid (Ser); by autocatalysis mark.

It belongs to the phosphatidylserine decarboxylase family. PSD-A subfamily. Heterodimer of a large membrane-associated beta subunit and a small pyruvoyl-containing alpha subunit. The cofactor is pyruvate. In terms of processing, is synthesized initially as an inactive proenzyme. Formation of the active enzyme involves a self-maturation process in which the active site pyruvoyl group is generated from an internal serine residue via an autocatalytic post-translational modification. Two non-identical subunits are generated from the proenzyme in this reaction, and the pyruvate is formed at the N-terminus of the alpha chain, which is derived from the carboxyl end of the proenzyme. The post-translation cleavage follows an unusual pathway, termed non-hydrolytic serinolysis, in which the side chain hydroxyl group of the serine supplies its oxygen atom to form the C-terminus of the beta chain, while the remainder of the serine residue undergoes an oxidative deamination to produce ammonia and the pyruvoyl prosthetic group on the alpha chain.

It localises to the cell membrane. The catalysed reaction is a 1,2-diacyl-sn-glycero-3-phospho-L-serine + H(+) = a 1,2-diacyl-sn-glycero-3-phosphoethanolamine + CO2. It functions in the pathway phospholipid metabolism; phosphatidylethanolamine biosynthesis; phosphatidylethanolamine from CDP-diacylglycerol: step 2/2. Its function is as follows. Catalyzes the formation of phosphatidylethanolamine (PtdEtn) from phosphatidylserine (PtdSer). This chain is Phosphatidylserine decarboxylase proenzyme, found in Ehrlichia canis (strain Jake).